The sequence spans 69 residues: uncharacterized protein (69 aa).

A helical membrane pass occupies residues 13–35 (IRSINPTLLNFINYFLLIVPQFI).

It localises to the membrane. This is an uncharacterized protein from Saccharomyces cerevisiae (strain ATCC 204508 / S288c) (Baker's yeast).